The sequence spans 532 residues: NADH-quinone oxidoreductase subunit N 2 (532 aa).

A run of 14 helical transmembrane segments spans residues 37–57, 63–83, 107–127, 133–153, 158–178, 192–212, 241–261, 276–296, 302–322, 336–356, 367–387, 411–431, 444–464, and 504–524; these read VAPPTLTALAALAVLVADLFL, RLLGYAALTALAAALALLIPL, FTLVIQALVLGGALLTVLLSL, LPAGEYWFLLLASAAGAALLP, LATLVVALEVASLPAFALVGI, FFLSSVVATAVMLLGVSFVYA, VALTLVGFAFKTAAAPFHFWV, LSVVGKAVGFSGLILVTVVAF, VWGPALAVLAALTMTAGNVAA, LLAWSSVAQAGYLLVPIAAAA, VAYALMYAVVNLGAFAVAAVV, LALGFFLLCLAGLPPGIIGLF, GLGWLAVVMAVNVVIALYYYL, and TAIVLTATAGILLSGVPQTVL.

It belongs to the complex I subunit 2 family. In terms of assembly, NDH-1 is composed of 14 different subunits. Subunits NuoA, H, J, K, L, M, N constitute the membrane sector of the complex.

The protein localises to the cell membrane. It catalyses the reaction a quinone + NADH + 5 H(+)(in) = a quinol + NAD(+) + 4 H(+)(out). Its function is as follows. NDH-1 shuttles electrons from NADH, via FMN and iron-sulfur (Fe-S) centers, to quinones in the respiratory chain. The immediate electron acceptor for the enzyme in this species is believed to be a menaquinone. Couples the redox reaction to proton translocation (for every two electrons transferred, four hydrogen ions are translocated across the cytoplasmic membrane), and thus conserves the redox energy in a proton gradient. This is NADH-quinone oxidoreductase subunit N 2 from Streptomyces griseus subsp. griseus (strain JCM 4626 / CBS 651.72 / NBRC 13350 / KCC S-0626 / ISP 5235).